Here is a 273-residue protein sequence, read N- to C-terminus: Homeobox protein Nkx-2.2 (273 aa).

2 disordered regions span residues 1-56 (MSLT…LDAV) and 90-131 (LAAG…KRKR). The segment covering 20–38 (DTNDEEGSVAEGPEEENEG) has biased composition (acidic residues). Positions 128–187 (KRKRRVLFSKAQTYELERRFRQQRYLSAPEREHLASLIRLTPTQVKIWFQNHRYKMKRAR) form a DNA-binding region, homeobox.

Belongs to the NK-2 homeobox family. In terms of assembly, interacts with OLIG2.

The protein resides in the nucleus. In terms of biological role, transcriptional activator involved in the development of insulin-producting beta cells in the endocrine pancreas. May also be involved in specifying diencephalic neuromeric boundaries, and in controlling the expression of genes that play a role in axonal guidance. Binds to elements within the NEUROD1 promoter. This Homo sapiens (Human) protein is Homeobox protein Nkx-2.2 (NKX2-2).